The sequence spans 273 residues: Undecaprenyl-diphosphatase (273 aa).

The next 7 membrane-spanning stretches (helical) occupy residues 48 to 68 (AANTFKVVIQLGSILAAVVVF), 89 to 109 (LTLLHVIIGLLPAGVLGVLFE), 116 to 136 (LFSTKTVLIGLVLGALLMIVA), 152 to 172 (ITYKQAFLVGLVQCLSLWPGF), 193 to 213 (ADFTFIMAVPIMAGASGLSLL), 222 to 242 (ADIPFFIAGFLSAFVFALLAI), and 252 to 272 (IRLVPFAVYRIALAFIIYFLY).

It belongs to the UppP family.

It is found in the cell membrane. The enzyme catalyses di-trans,octa-cis-undecaprenyl diphosphate + H2O = di-trans,octa-cis-undecaprenyl phosphate + phosphate + H(+). Catalyzes the dephosphorylation of undecaprenyl diphosphate (UPP). Confers resistance to bacitracin. The chain is Undecaprenyl-diphosphatase from Geobacillus thermodenitrificans (strain NG80-2).